The chain runs to 96 residues: MLKVNEYFAGKVKSIGFDSSSIGLTSVGVMEEGEYTFTTALPEEMTVITGALKVLLPGSPDWQVFMPGEKFFVPAHSEFNLQVADATAYLCRYLSK.

This sequence belongs to the nucleoside phosphorylase PpnP family.

It catalyses the reaction a purine D-ribonucleoside + phosphate = a purine nucleobase + alpha-D-ribose 1-phosphate. The catalysed reaction is adenosine + phosphate = alpha-D-ribose 1-phosphate + adenine. The enzyme catalyses cytidine + phosphate = cytosine + alpha-D-ribose 1-phosphate. It carries out the reaction guanosine + phosphate = alpha-D-ribose 1-phosphate + guanine. It catalyses the reaction inosine + phosphate = alpha-D-ribose 1-phosphate + hypoxanthine. The catalysed reaction is thymidine + phosphate = 2-deoxy-alpha-D-ribose 1-phosphate + thymine. The enzyme catalyses uridine + phosphate = alpha-D-ribose 1-phosphate + uracil. It carries out the reaction xanthosine + phosphate = alpha-D-ribose 1-phosphate + xanthine. In terms of biological role, catalyzes the phosphorolysis of diverse nucleosides, yielding D-ribose 1-phosphate and the respective free bases. Can use uridine, adenosine, guanosine, cytidine, thymidine, inosine and xanthosine as substrates. Also catalyzes the reverse reactions. This Serratia proteamaculans (strain 568) protein is Pyrimidine/purine nucleoside phosphorylase.